The sequence spans 466 residues: Alpha-1A adrenergic receptor (466 aa).

The Extracellular portion of the chain corresponds to methionine 1–lysine 25. Residues asparagine 7 and asparagine 13 are each glycosylated (N-linked (GlcNAc...) asparagine). The chain crosses the membrane as a helical span at residues alanine 26–valine 51. Residues alanine 52 to tyrosine 63 are Cytoplasmic-facing. The chain crosses the membrane as a helical span at residues tyrosine 64–leucine 89. Topologically, residues glycine 90–cysteine 99 are extracellular. A helical membrane pass occupies residues asparagine 100–isoleucine 122. Residues aspartate 123–glycine 143 lie on the Cytoplasmic side of the membrane. A helical transmembrane segment spans residues leucine 144–proline 168. Residues alanine 169–aspartate 181 are Extracellular-facing. A helical membrane pass occupies residues proline 182–cysteine 205. Over arginine 206 to lysine 272 the chain is Cytoplasmic. The chain crosses the membrane as a helical span at residues threonine 273–phenylalanine 297. Over phenylalanine 298–serine 304 the chain is Extracellular. A helical transmembrane segment spans residues glutamate 305–serine 329. The Cytoplasmic portion of the chain corresponds to serine 330–valine 466. The short motif at lysine 334–lysine 349 is the Nuclear localization signal element. A lipid anchor (S-palmitoyl cysteine) is attached at cysteine 345.

Belongs to the G-protein coupled receptor 1 family. Adrenergic receptor subfamily. ADRA1A sub-subfamily. Homo- and heterooligomer. Heterooligomerizes with ADRA1B homooligomers in cardiac myocytes. Interacts with CAVIN4.

The protein localises to the nucleus membrane. Its subcellular location is the cell membrane. It localises to the cytoplasm. The protein resides in the membrane. It is found in the caveola. Functionally, this alpha-adrenergic receptor mediates its action by association with G proteins that activate a phosphatidylinositol-calcium second messenger system. Its effect is mediated by G(q) and G(11) proteins. Nuclear ADRA1A-ADRA1B heterooligomers regulate phenylephrine (PE)-stimulated ERK signaling in cardiac myocytes. In Cavia porcellus (Guinea pig), this protein is Alpha-1A adrenergic receptor (ADRA1A).